A 414-amino-acid polypeptide reads, in one-letter code: 3-oxo-isoapionate-4-phosphate transcarboxylase/hydrolase (414 aa).

3 residues coordinate Mg(2+): Lys-180, Asp-182, and Glu-183. An N6-carboxylysine modification is found at Lys-180.

This sequence belongs to the RuBisCO large chain family. Requires Mg(2+) as cofactor.

It catalyses the reaction 3-oxoisoapionate 4-phosphate + H2O = (2R)-3-phosphoglycerate + glycolate + H(+). It functions in the pathway carbohydrate metabolism. In terms of biological role, involved in catabolism of D-apiose. Catalyzes the conversion of 3-oxo-isoapionate 4-phosphate to 3-phosphoglycerate and glycolate. The protein is 3-oxo-isoapionate-4-phosphate transcarboxylase/hydrolase of Xanthobacter autotrophicus (strain ATCC BAA-1158 / Py2).